The sequence spans 307 residues: Myeloid-associated differentiation marker-like protein 2 (307 aa).

2 consecutive MARVEL domains span residues 17-154 and 159-303; these read AVTS…ARPG and YMAT…RIRF. Transmembrane regions (helical) follow at residues 53–73, 90–110, 129–149, 163–183, 198–218, 232–252, and 278–298; these read FCVA…ACEF, AFAM…PLYF, LAAS…VALT, VSGL…GALV, VAVY…SVLG, VVYT…WPVF, and LVVA…LAYS.

Belongs to the MAL family.

The protein resides in the membrane. The polypeptide is Myeloid-associated differentiation marker-like protein 2 (MYADML2) (Bos taurus (Bovine)).